The chain runs to 1125 residues: Exportin-6 (1125 aa).

A2 is subject to N-acetylalanine. Residues 31–97 form the Importin N-terminal domain; that stretch reads IEELLNNFAQ…RSCLPKLLLA (67 aa). At S199 the chain carries Phosphoserine. Phosphothreonine occurs at positions 201 and 204. Residues S208 and S224 each carry the phosphoserine modification.

This sequence belongs to the exportin family. Found in a complex with XPO6, Ran, ACTB and PFN1. Interacts with ACTB. Interacts with ACTB in a RanGTP-dependent manner.

The protein resides in the nucleus. It is found in the cytoplasm. Functionally, mediates the nuclear export of actin and profilin-actin complexes in somatic cells. The sequence is that of Exportin-6 (Xpo6) from Mus musculus (Mouse).